The chain runs to 429 residues: Enolase (429 aa).

Gln163 is a binding site for (2R)-2-phosphoglycerate. The active-site Proton donor is the Glu205. Asp242, Glu286, and Asp313 together coordinate Mg(2+). Positions 338, 367, 368, and 389 each coordinate (2R)-2-phosphoglycerate. Catalysis depends on Lys338, which acts as the Proton acceptor.

Belongs to the enolase family. Requires Mg(2+) as cofactor.

It localises to the cytoplasm. The protein resides in the secreted. It is found in the cell surface. It catalyses the reaction (2R)-2-phosphoglycerate = phosphoenolpyruvate + H2O. Its pathway is carbohydrate degradation; glycolysis; pyruvate from D-glyceraldehyde 3-phosphate: step 4/5. Its function is as follows. Catalyzes the reversible conversion of 2-phosphoglycerate (2-PG) into phosphoenolpyruvate (PEP). It is essential for the degradation of carbohydrates via glycolysis. In Thermoanaerobacter pseudethanolicus (strain ATCC 33223 / 39E) (Clostridium thermohydrosulfuricum), this protein is Enolase.